The chain runs to 164 residues: Monothiol glutaredoxin-S10 (164 aa).

In terms of domain architecture, Glutaredoxin spans 60–161; the sequence is EDSVKRTLAD…TMLSELDIDV (102 aa). Residue C80 participates in [2Fe-2S] cluster binding.

It belongs to the glutaredoxin family. CPYC subfamily.

It is found in the cytoplasm. May only reduce GSH-thiol disulfides, but not protein disulfides. In Oryza sativa subsp. japonica (Rice), this protein is Monothiol glutaredoxin-S10 (GRXS10).